A 314-amino-acid polypeptide reads, in one-letter code: Splicing factor YJU2 (314 aa).

Zn(2+) is bound by residues Cys43, Cys46, Cys80, and Cys83. Disordered stretches follow at residues 178 to 238 and 253 to 314; these read MSQE…NEVP and LAGL…DSDS. Residues 200 to 209 are compositionally biased toward basic and acidic residues; it reads EEARHRRLLE. Phosphoserine is present on residues Ser211, Ser213, and Ser220. The span at 222–232 shows a compositional bias: low complexity; it reads PRAAARPNPTA. Polar residues predominate over residues 290-302; that stretch reads PTPQTPGTSSLSQ. 3 positions are modified to phosphoserine: Ser309, Ser312, and Ser314.

It belongs to the CWC16 family. YJU2 subfamily. Component of the spliceosome. Present in the activated B complex, the catalytically activated B* complex which catalyzes the branching, the catalytic step 1 C complex catalyzing the exon ligation, and the postcatalytic P complex containing the ligated exons (mRNA) and the excised lariat intron.

It localises to the nucleus. Part of the spliceosome which catalyzes two sequential transesterification reactions, first the excision of the non-coding intron from pre-mRNA and then the ligation of the coding exons to form the mature mRNA. Plays a role in stabilizing the structure of the spliceosome catalytic core and docking of the branch helix into the active site, producing 5'-exon and lariat intron-3'-intermediates. May protect cells from TP53-dependent apoptosis upon dsDNA break damage through association with PRP19-CD5L complex. The chain is Splicing factor YJU2 from Mus musculus (Mouse).